A 200-amino-acid polypeptide reads, in one-letter code: Holliday junction branch migration complex subunit RuvA (200 aa).

Residues 1–63 (MIASVRGVVT…EDSLTLYGFA (63 aa)) are domain I. The interval 64–142 (DDNAKALFEL…PVPVGGDGAA (79 aa)) is domain II. Residues 143 to 151 (GVTTGAWPE) are flexible linker. Positions 151–200 (EQVRQALVGLGWTAGQAEQAVAAVAETVDGEVPPVPVLLRQAIRLLGRTR) are domain III.

The protein belongs to the RuvA family. Homotetramer. Forms an RuvA(8)-RuvB(12)-Holliday junction (HJ) complex. HJ DNA is sandwiched between 2 RuvA tetramers; dsDNA enters through RuvA and exits via RuvB. An RuvB hexamer assembles on each DNA strand where it exits the tetramer. Each RuvB hexamer is contacted by two RuvA subunits (via domain III) on 2 adjacent RuvB subunits; this complex drives branch migration. In the full resolvosome a probable DNA-RuvA(4)-RuvB(12)-RuvC(2) complex forms which resolves the HJ.

Its subcellular location is the cytoplasm. Its function is as follows. The RuvA-RuvB-RuvC complex processes Holliday junction (HJ) DNA during genetic recombination and DNA repair, while the RuvA-RuvB complex plays an important role in the rescue of blocked DNA replication forks via replication fork reversal (RFR). RuvA specifically binds to HJ cruciform DNA, conferring on it an open structure. The RuvB hexamer acts as an ATP-dependent pump, pulling dsDNA into and through the RuvAB complex. HJ branch migration allows RuvC to scan DNA until it finds its consensus sequence, where it cleaves and resolves the cruciform DNA. This Salinispora arenicola (strain CNS-205) protein is Holliday junction branch migration complex subunit RuvA.